The sequence spans 430 residues: Asparagine--tRNA ligase (430 aa).

It belongs to the class-II aminoacyl-tRNA synthetase family. In terms of assembly, homodimer.

The protein localises to the cytoplasm. It catalyses the reaction tRNA(Asn) + L-asparagine + ATP = L-asparaginyl-tRNA(Asn) + AMP + diphosphate + H(+). The chain is Asparagine--tRNA ligase from Oceanobacillus iheyensis (strain DSM 14371 / CIP 107618 / JCM 11309 / KCTC 3954 / HTE831).